Consider the following 549-residue polypeptide: Thermosome subunit (549 aa).

Over residues 528–538 (EKEKEGEKGGG) the composition is skewed to basic and acidic residues. The segment at 528-549 (EKEKEGEKGGGSEEFSGSSDLD) is disordered. Low complexity predominate over residues 540–549 (EEFSGSSDLD).

This sequence belongs to the TCP-1 chaperonin family. As to quaternary structure, forms an oligomeric complex of eight-membered rings.

Its function is as follows. Molecular chaperone; binds unfolded polypeptides in vitro, and has a weak ATPase activity. The sequence is that of Thermosome subunit (ths) from Pyrococcus horikoshii (strain ATCC 700860 / DSM 12428 / JCM 9974 / NBRC 100139 / OT-3).